We begin with the raw amino-acid sequence, 444 residues long: Tubulin beta-4 chain (444 aa).

Positions 11, 69, 138, 142, 143, 144, 204, and 226 each coordinate GTP. E69 serves as a coordination point for Mg(2+).

This sequence belongs to the tubulin family. In terms of assembly, dimer of alpha and beta chains. A typical microtubule is a hollow water-filled tube with an outer diameter of 25 nm and an inner diameter of 15 nM. Alpha-beta heterodimers associate head-to-tail to form protofilaments running lengthwise along the microtubule wall with the beta-tubulin subunit facing the microtubule plus end conferring a structural polarity. Microtubules usually have 13 protofilaments but different protofilament numbers can be found in some organisms and specialized cells. Mg(2+) is required as a cofactor.

It localises to the cytoplasm. Its subcellular location is the cytoskeleton. Its function is as follows. Tubulin is the major constituent of microtubules, a cylinder consisting of laterally associated linear protofilaments composed of alpha- and beta-tubulin heterodimers. Microtubules grow by the addition of GTP-tubulin dimers to the microtubule end, where a stabilizing cap forms. Below the cap, tubulin dimers are in GDP-bound state, owing to GTPase activity of alpha-tubulin. The polypeptide is Tubulin beta-4 chain (TUBB4) (Arabidopsis thaliana (Mouse-ear cress)).